A 694-amino-acid polypeptide reads, in one-letter code: Nucleolin (694 aa).

Positions 1 to 277 (MVKLAKTPKN…EAKKKKTETP (277 aa)) are disordered. Positions 26 to 40 (ESEEEESSDLEESSG) are enriched in acidic residues. The segment covering 46 to 108 (PPKKQQKAAV…AVVGKGAKNG (63 aa)) has biased composition (low complexity). A run of 5 repeats spans residues 55 to 61 (VTPAKKA), 62 to 68 (ATPAKKA), 69 to 75 (ATPAKKA), 76 to 82 (VTPAKKA), and 84 to 90 (ATPAKKA). The interval 55-90 (VTPAKKAATPAKKAATPAKKAVTPAKKAVATPAKKA) is 5 X 7 AA tandem repeats of X-T-P-X-K-K-X. Phosphoserine is present on residues serine 116 and serine 136. Acidic residues predominate over residues 116–142 (SEEEDEDDEDDEEDEDEEEESDEEEEP). Residues 143 to 168 (AVPVKPAAKKSAAAVPAKKPAVVPAK) show a composition bias toward low complexity. Phosphoserine is present on serine 171. The segment covering 171 to 194 (SEEEEEEDDEEEDEEDDESEDEAM) has biased composition (acidic residues). Over residues 196 to 213 (TTPAPVKKPTPAKATPAK) the composition is skewed to low complexity. Over residues 218 to 246 (SEDEEDEEDEDEDEEDEDDEEEDEEESED) the composition is skewed to acidic residues. RRM domains are found at residues 281 to 357 (FSLF…KAKS), 371 to 445 (RTLF…YTGE), 461 to 535 (KTLI…FSSP), and 553 to 628 (KTLF…FAKP). Residues 631–694 (EFQRGGGFGG…KPQGKKIKFE (64 aa)) form a disordered region. The segment covering 633–680 (QRGGGFGGGFGGRGGRGGRGGGRGGFGGRGGGRGFGGRGGGFRGGRGG) has biased composition (gly residues). The span at 681–694 (GGDHKPQGKKIKFE) shows a compositional bias: basic and acidic residues.

In terms of processing, highly phosphorylated during mitosis.

Its subcellular location is the nucleus. The protein resides in the nucleolus. Its function is as follows. Nucleolin is the major nucleolar protein of growing eukaryotic cells. It is found associated with intranucleolar chromatin and pre-ribosomal particles. It induces chromatin decondensation by binding to histone H1. It is thought to play a role in pre-rRNA transcription and ribosome assembly. The polypeptide is Nucleolin (NCL) (Gallus gallus (Chicken)).